Here is a 244-residue protein sequence, read N- to C-terminus: Small ribosomal subunit protein eS4 (244 aa).

An S4 RNA-binding domain is found at 37–123 (VPLAILLKYY…AKYKFVRIMN (87 aa)).

It belongs to the eukaryotic ribosomal protein eS4 family.

This Sulfolobus acidocaldarius (strain ATCC 33909 / DSM 639 / JCM 8929 / NBRC 15157 / NCIMB 11770) protein is Small ribosomal subunit protein eS4 (rps4e).